We begin with the raw amino-acid sequence, 625 residues long: uncharacterized protein (625 aa).

Positions 23-51 (CLACRRKKLKCDHGRPCSNCLKRSTIQSC) form a DNA-binding region, zn(2)-C6 fungal-type. Positions 93-113 (GTKSQSDYENQQSHNLPSTPS) are enriched in polar residues. Residues 93–119 (GTKSQSDYENQQSHNLPSTPSADAETQ) form a disordered region.

The protein localises to the nucleus. The protein resides in the cytoplasm. It is found in the cytoskeleton. Its subcellular location is the spindle. This is an uncharacterized protein from Schizosaccharomyces pombe (strain 972 / ATCC 24843) (Fission yeast).